Here is a 639-residue protein sequence, read N- to C-terminus: MDLLYYMTVSLLGFILSLTTFIGETTRALSDDVSSPCKASGFLGDIALTEDDYEREMIRARHNREQYRRRILQERQTRTTGARHHIKKRTIEEAKVRHVRAVTARPERRWTDAVIPYEIDGNFTGSQRAMFKQAMRHWENYTCITFVERNPANSEHDNHIVFTYQACGCCSFVGRKGDGAQAVSVGKNCDKFGVVVHELGHVVGFWHEHTRPDRNEFVGIVHQNIVPGQEYNFRVLDAAEVDSLGETYDFASIMHYARNTFSRGIWLDTILPRKDPESGIRPEIGQRKHLSEGDIIQANLLYKCPSCGRTLLESTGNFSSPEWPGQYDGDQTCVWRISVTPGETISLQFTGFELVGSDGCWYNYLEVRDGHWRHSPLLGRFCGASLPDPILSSDSRLWIELKSSAHRYSRGFAANYEAICGGHIERESGTLQSPNYPDDYHPSKECVWLITMPANYTVGLSFQSFEIERHETCIYDYVEVRDGHEDTSPLIGRYCGYFIPDDIKSTGNKMMVTFVSDGSVNKGGFSADFFKEKDECAQPDQGGCMDVCVNTIGSYRCDCRPGYELSSDGRRCEVAAEVYSLVYEGISPALLIPSPIRGTRTVSGRSSHHLTTGSHSSLSPLTSRVTRCASTTTLMSVAV.

The N-terminal stretch at 1 to 23 is a signal peptide; sequence MDLLYYMTVSLLGFILSLTTFIG. The propeptide occupies 24–109; it reads ETTRALSDDV…RAVTARPERR (86 aa). Residues 100–305 form the Peptidase M12A domain; sequence RAVTARPERR…IQANLLYKCP (206 aa). Residues Asn-122 and Asn-140 are each glycosylated (N-linked (GlcNAc...) asparagine). 6 cysteine pairs are disulfide-bonded: Cys-143-Cys-304, Cys-167-Cys-189, Cys-169-Cys-170, Cys-307-Cys-333, Cys-360-Cys-382, and Cys-420-Cys-446. Zn(2+) is bound at residue His-197. Glu-198 is an active-site residue. 2 residues coordinate Zn(2+): His-201 and His-207. 2 CUB domains span residues 307–419 and 420–531; these read CGRT…YEAI and CGGH…DFFK. The N-linked (GlcNAc...) asparagine glycan is linked to Asn-317. Asn-455 carries an N-linked (GlcNAc...) asparagine glycan. Disulfide bonds link Cys-473-Cys-495, Cys-536-Cys-548, Cys-544-Cys-557, and Cys-559-Cys-572. One can recognise an EGF-like; calcium-binding domain in the interval 532 to 573; it reads EKDECAQPDQGGCMDVCVNTIGSYRCDCRPGYELSSDGRRCE.

Zn(2+) is required as a cofactor. In terms of tissue distribution, ectodermal and primary mesenchyme cells in hatched blastula.

The protein is Bone morphogenetic protein 1 homolog of Strongylocentrotus purpuratus (Purple sea urchin).